The primary structure comprises 188 residues: Acireductone dioxygenase (188 aa).

Fe(2+) contacts are provided by His97, His99, Glu103, and His141. Ni(2+) contacts are provided by His97, His99, Glu103, and His141.

It belongs to the acireductone dioxygenase (ARD) family. In terms of assembly, monomer. Fe(2+) serves as cofactor. The cofactor is Ni(2+).

It carries out the reaction 1,2-dihydroxy-5-(methylsulfanyl)pent-1-en-3-one + O2 = 3-(methylsulfanyl)propanoate + CO + formate + 2 H(+). The catalysed reaction is 1,2-dihydroxy-5-(methylsulfanyl)pent-1-en-3-one + O2 = 4-methylsulfanyl-2-oxobutanoate + formate + 2 H(+). Its pathway is amino-acid biosynthesis; L-methionine biosynthesis via salvage pathway; L-methionine from S-methyl-5-thio-alpha-D-ribose 1-phosphate: step 5/6. Its function is as follows. Catalyzes 2 different reactions between oxygen and the acireductone 1,2-dihydroxy-3-keto-5-methylthiopentene (DHK-MTPene) depending upon the metal bound in the active site. Fe-containing acireductone dioxygenase (Fe-ARD) produces formate and 2-keto-4-methylthiobutyrate (KMTB), the alpha-ketoacid precursor of methionine in the methionine recycle pathway. Ni-containing acireductone dioxygenase (Ni-ARD) produces methylthiopropionate, carbon monoxide and formate, and does not lie on the methionine recycle pathway. The sequence is that of Acireductone dioxygenase from Xanthomonas euvesicatoria pv. vesicatoria (strain 85-10) (Xanthomonas campestris pv. vesicatoria).